Consider the following 128-residue polypeptide: UPF0325 protein YaeH (128 aa).

The protein belongs to the UPF0325 family.

The protein is UPF0325 protein YaeH of Escherichia coli (strain ATCC 8739 / DSM 1576 / NBRC 3972 / NCIMB 8545 / WDCM 00012 / Crooks).